A 293-amino-acid chain; its full sequence is Acetyl-coenzyme A carboxylase carboxyl transferase subunit beta (293 aa).

In terms of domain architecture, CoA carboxyltransferase N-terminal spans 29-293 (LWVKCSECSQ…GVKELAEANI (265 aa)). Residues C33, C36, C52, and C55 each contribute to the Zn(2+) site. The C4-type zinc-finger motif lies at 33–55 (CSECSQVAYRKDLISNFNVCSNC).

The protein belongs to the AccD/PCCB family. Acetyl-CoA carboxylase is a heterohexamer composed of biotin carboxyl carrier protein (AccB), biotin carboxylase (AccC) and two subunits each of ACCase subunit alpha (AccA) and ACCase subunit beta (AccD). It depends on Zn(2+) as a cofactor.

The protein localises to the cytoplasm. It carries out the reaction N(6)-carboxybiotinyl-L-lysyl-[protein] + acetyl-CoA = N(6)-biotinyl-L-lysyl-[protein] + malonyl-CoA. The protein operates within lipid metabolism; malonyl-CoA biosynthesis; malonyl-CoA from acetyl-CoA: step 1/1. Functionally, component of the acetyl coenzyme A carboxylase (ACC) complex. Biotin carboxylase (BC) catalyzes the carboxylation of biotin on its carrier protein (BCCP) and then the CO(2) group is transferred by the transcarboxylase to acetyl-CoA to form malonyl-CoA. This is Acetyl-coenzyme A carboxylase carboxyl transferase subunit beta from Prochlorococcus marinus (strain MIT 9312).